A 564-amino-acid chain; its full sequence is Type 2 DNA topoisomerase 6 subunit B (564 aa).

ATP-binding positions include asparagine 46, aspartate 78, 99–100 (TK), 109–116 (GQQGIGIS), and lysine 471.

This sequence belongs to the TOP6B family. Homodimer. Heterotetramer of two Top6A and two Top6B chains.

It carries out the reaction ATP-dependent breakage, passage and rejoining of double-stranded DNA.. In terms of biological role, relaxes both positive and negative superturns and exhibits a strong decatenase activity. This is Type 2 DNA topoisomerase 6 subunit B from Pyrococcus abyssi (strain GE5 / Orsay).